The sequence spans 386 residues: Ribonucleoside-diphosphate reductase subunit M2 (386 aa).

The segment covering 1–24 has biased composition (polar residues); sequence MSSTRSPLKTKNENTISTKMNNMS. Positions 1–36 are disordered; it reads MSSTRSPLKTKNENTISTKMNNMSFVDKENTPPSLS. Position 6 is a phosphoserine (Ser-6). Thr-31 carries the post-translational modification Phosphothreonine. Residues Asp-135, Glu-166, and His-169 each contribute to the Fe cation site. Residue Tyr-173 is part of the active site. Positions 229, 263, and 266 each coordinate Fe cation.

This sequence belongs to the ribonucleoside diphosphate reductase small chain family. As to quaternary structure, heterodimer of a large and a small subunit. Requires Fe cation as cofactor.

It localises to the cytoplasm. It catalyses the reaction a 2'-deoxyribonucleoside 5'-diphosphate + [thioredoxin]-disulfide + H2O = a ribonucleoside 5'-diphosphate + [thioredoxin]-dithiol. Functionally, provides the precursors necessary for DNA synthesis. Catalyzes the biosynthesis of deoxyribonucleotides from the corresponding ribonucleotides. The chain is Ribonucleoside-diphosphate reductase subunit M2 (rrm2) from Danio rerio (Zebrafish).